A 192-amino-acid polypeptide reads, in one-letter code: MKWCVLMLALLQSLCCSGLPLYQSELASTADKALVVTMTQVNNLYAGLRLYRVTRGSIKRVVPLGLNTYDLMMNFGIKETDCLKSSGEDPQRCAFRVGFFVPAASCTARVRVTAELTQVVSLNCGQDSSSSESSSEENFTRKRQQLNVQPSGNRGPVLPGFSEATLFPSHSFSRQVEPQPIPRGDSIGNHLE.

Residues 1–18 form the signal peptide; it reads MKWCVLMLALLQSLCCSG. Disulfide bonds link C82–C93 and C106–C124. Residues 124 to 192 are disordered; it reads CGQDSSSSES…RGDSIGNHLE (69 aa). The segment covering 128-137 has biased composition (low complexity); the sequence is SSSSESSSEE.

This sequence belongs to the SPP2 family. In terms of processing, multiply phosphorylated at serine residues.

The protein resides in the secreted. Could coordinate an aspect of bone turnover. This is Secreted phosphoprotein 24 (spp2) from Oncorhynchus mykiss (Rainbow trout).